The following is a 406-amino-acid chain: Ribulose bisphosphate carboxylase large chain (406 aa).

Residues N101 and T151 each contribute to the substrate site. K153 serves as the catalytic Proton acceptor. Residue K155 participates in substrate binding. Residues K179, D181, and E182 each contribute to the Mg(2+) site. K179 carries the post-translational modification N6-carboxylysine. The Proton acceptor role is filled by H272. The substrate site is built by R273, H305, and S357.

Belongs to the RuBisCO large chain family. Type I subfamily. As to quaternary structure, heterohexadecamer of 8 large chains and 8 small chains; disulfide-linked. The disulfide link is formed within the large subunit homodimers. Mg(2+) serves as cofactor. Post-translationally, the disulfide bond which can form in the large chain dimeric partners within the hexadecamer appears to be associated with oxidative stress and protein turnover.

The protein resides in the plastid. Its subcellular location is the chloroplast. The enzyme catalyses 2 (2R)-3-phosphoglycerate + 2 H(+) = D-ribulose 1,5-bisphosphate + CO2 + H2O. It carries out the reaction D-ribulose 1,5-bisphosphate + O2 = 2-phosphoglycolate + (2R)-3-phosphoglycerate + 2 H(+). Its function is as follows. RuBisCO catalyzes two reactions: the carboxylation of D-ribulose 1,5-bisphosphate, the primary event in carbon dioxide fixation, as well as the oxidative fragmentation of the pentose substrate in the photorespiration process. Both reactions occur simultaneously and in competition at the same active site. The protein is Ribulose bisphosphate carboxylase large chain (rbcL) of Trichomanes striatum (Fern).